Reading from the N-terminus, the 232-residue chain is Large ribosomal subunit protein uL1 (232 aa).

The protein belongs to the universal ribosomal protein uL1 family. Part of the 50S ribosomal subunit.

Its function is as follows. Binds directly to 23S rRNA. The L1 stalk is quite mobile in the ribosome, and is involved in E site tRNA release. In terms of biological role, protein L1 is also a translational repressor protein, it controls the translation of the L11 operon by binding to its mRNA. This Levilactobacillus brevis (strain ATCC 367 / BCRC 12310 / CIP 105137 / JCM 1170 / LMG 11437 / NCIMB 947 / NCTC 947) (Lactobacillus brevis) protein is Large ribosomal subunit protein uL1.